We begin with the raw amino-acid sequence, 224 residues long: Ribonuclease T (224 aa).

An Exonuclease domain is found at 32-206; the sequence is VVVDVETGGF…YDTEKTAELF (175 aa). Residues Asp-35, Glu-37, His-193, and Asp-198 each contribute to the Mg(2+) site. His-193 serves as the catalytic Proton donor/acceptor.

This sequence belongs to the RNase T family. In terms of assembly, homodimer. It depends on Mg(2+) as a cofactor.

In terms of biological role, trims short 3' overhangs of a variety of RNA species, leaving a one or two nucleotide 3' overhang. Responsible for the end-turnover of tRNA: specifically removes the terminal AMP residue from uncharged tRNA (tRNA-C-C-A). Also appears to be involved in tRNA biosynthesis. The chain is Ribonuclease T from Pseudomonas paraeruginosa (strain DSM 24068 / PA7) (Pseudomonas aeruginosa (strain PA7)).